A 78-amino-acid chain; its full sequence is Putative membrane protein insertion efficiency factor (78 aa).

Belongs to the UPF0161 family.

The protein localises to the cell inner membrane. In terms of biological role, could be involved in insertion of integral membrane proteins into the membrane. This is Putative membrane protein insertion efficiency factor from Roseobacter denitrificans (strain ATCC 33942 / OCh 114) (Erythrobacter sp. (strain OCh 114)).